A 1128-amino-acid chain; its full sequence is GTPase-activating protein BEM3 (1128 aa).

The interval 194–241 (SSPTKIHSEQLASPAASVTYTTSRITIKSPNKGSKSPLQERLRSPQNP) is disordered. Polar residues predominate over residues 209–230 (ASVTYTTSRITIKSPNKGSKSP). S254 carries the phosphoserine modification. 2 disordered regions span residues 345–391 (EDLV…TPLS) and 418–486 (PVLT…RPHA). Pro residues predominate over residues 366–375 (LPPPPAPPTF). Composition is skewed to polar residues over residues 382 to 391 (GNIKNSTPLS) and 420 to 478 (LTSS…QGSL). One can recognise a PH domain in the interval 634–741 (DNVKDGSLLL…WLSAFSDYID (108 aa)). Disordered regions lie at residues 746–777 (LSLS…NATI) and 796–838 (NNNI…DSRR). The segment covering 752-764 (RNANDTDSASHLS) has biased composition (polar residues). Over residues 796-815 (NNNISNSSNNIANSDGIDSN) the composition is skewed to low complexity. A compositionally biased stretch (polar residues) spans 816-829 (PSSHSNFLASSSGN). Residues 913–1128 (LRLSSHKYQN…EKVDIHIPQV (216 aa)) form the Rho-GAP domain.

Its subcellular location is the cytoplasm. Its function is as follows. GTPase-activating protein (GAP) for CDC42 and less efficiently for RHO1. Negative regulator of the pheromone-response pathway through the STE20 protein kinase. In Saccharomyces cerevisiae (strain ATCC 204508 / S288c) (Baker's yeast), this protein is GTPase-activating protein BEM3 (BEM3).